Here is a 284-residue protein sequence, read N- to C-terminus: Tryptophan synthase alpha chain (284 aa).

Catalysis depends on proton acceptor residues Glu59 and Asp70.

This sequence belongs to the TrpA family. In terms of assembly, tetramer of two alpha and two beta chains.

The catalysed reaction is (1S,2R)-1-C-(indol-3-yl)glycerol 3-phosphate + L-serine = D-glyceraldehyde 3-phosphate + L-tryptophan + H2O. The protein operates within amino-acid biosynthesis; L-tryptophan biosynthesis; L-tryptophan from chorismate: step 5/5. Functionally, the alpha subunit is responsible for the aldol cleavage of indoleglycerol phosphate to indole and glyceraldehyde 3-phosphate. This chain is Tryptophan synthase alpha chain, found in Azospirillum brasilense.